A 1021-amino-acid polypeptide reads, in one-letter code: Nonribosomal peptide synthetase asaC (1021 aa).

Residues Arg17–Arg418 are adenylation (A) domain. Residues Lys528 to His603 form the Carrier domain. Residue Ser563 is modified to O-(pantetheine 4'-phosphoryl)serine. The interval Leu646 to Ala888 is short-chain dehydrogenase/reductase (R) domain.

The protein belongs to the NRP synthetase family.

It participates in secondary metabolite biosynthesis. Its function is as follows. Nonribosomal peptide synthetase; part of the gene cluster that mediates the biosynthesis of aspergillic acid, a hydroxamic acid-containing pyrazinone with aliphatic side chains that originates from leucine (Leu) and isoleucine (Ile). Aspergillic acid has antibiotic properties and was shown to be lethal to mice. The first step in the pathway is the production of deoxyaspergillic acid via a condensation between the Ile amine and the Leu carboxylic acid, followed by a reductive release from the protein forming the dipeptide aldehyde NH(2)-Leu-Ile-CHO, which could undergo an intermolecular cyclization resulting in a dihydropyrazinone. As the NRPS asaC lacks a condensation domain, it is improbable that it is responsible for condensation of Leu and Ile. One possibility is that asaC acts on a previously condensed dipeptide and functions as a Leu-Ile reductase to yield deoxyaspergillic acid. After asaC forms deoxyaspergillic acid, the cytochrome P450 asaD oxidizes the pyrazinone to the hydroxamic acid-containing bioactive metabolite aspergillic acid. The hydroxylase/desaturase asaB can then convert aspergillic acid to hydroxyaspergillic acid. Both aspergillic acid and hydroxyaspergillic acid can form complexes with iron producing ferriaspergillin analogs. The chain is Nonribosomal peptide synthetase asaC from Aspergillus flavus (strain ATCC 200026 / FGSC A1120 / IAM 13836 / NRRL 3357 / JCM 12722 / SRRC 167).